The chain runs to 973 residues: Putative helicase 022R (973 aa).

Residues 473–502 (AKARGGRDSGNEDDEEDSATDEDDSNPWDS) form a disordered region. Positions 483-498 (NEDDEEDSATDEDDSN) are enriched in acidic residues. The 183-residue stretch at 658–840 (GPVTKLLAFF…FVTPGTTAPA (183 aa)) folds into the SF3 helicase domain. Position 702 to 709 (702 to 709 (GTGNNGKT)) interacts with ATP.

This chain is Putative helicase 022R, found in Frog virus 3 (isolate Goorha) (FV-3).